We begin with the raw amino-acid sequence, 312 residues long: Olfactory receptor OR51C1 (312 aa).

The Extracellular segment spans residues 1 to 26 (MGSNITSTSIIFLLTGVPGLEAFHTW). A helical membrane pass occupies residues 27–47 (ISIPFCFLSVTALLGNSLILF). Over 48 to 66 (ATITQPSLHEPMYYFLSML) the chain is Cytoplasmic. Residues 67–87 (SATDLGLSISTLVTMLSIFWF) form a helical membrane-spanning segment. The Extracellular portion of the chain corresponds to 88–99 (NVREISFNACLS). An intrachain disulfide couples Cys-97 to Cys-179. A helical membrane pass occupies residues 100-120 (HMFFIKFFTVMESSVLLAMAF). At 121–143 (DRFVAVSNPLRYAMILTDSRIAQ) the chain is on the cytoplasmic side. A helical membrane pass occupies residues 144 to 164 (IGVASVIRGLLMLTPMVALLI). Residues 165 to 201 (RLSYCHSQVLHHSYCYHPDVMKLSCTDTRINSAVGLT) are Extracellular-facing. A helical transmembrane segment spans residues 202 to 222 (AMFSTVGVDLLLILLSYVLII). The Cytoplasmic portion of the chain corresponds to 223–240 (RTVLSVASPEERKETFST). Residues 241 to 261 (CVSHIVAFAIYYIPLISLSIV) traverse the membrane as a helical segment. Topologically, residues 262–273 (HRFGKQAPAYVH) are extracellular. A helical transmembrane segment spans residues 274 to 294 (TMIANTYLLISPLMNPVIYSV). Residues 295-312 (KTKQIRRAVIKILHSKET) are Cytoplasmic-facing.

The protein belongs to the G-protein coupled receptor 1 family.

It is found in the membrane. In terms of biological role, odorant receptor. In Homo sapiens (Human), this protein is Olfactory receptor OR51C1.